The following is a 358-amino-acid chain: Peptide chain release factor 1 (358 aa).

Q235 carries the N5-methylglutamine modification.

It belongs to the prokaryotic/mitochondrial release factor family. Post-translationally, methylated by PrmC. Methylation increases the termination efficiency of RF1.

It localises to the cytoplasm. Its function is as follows. Peptide chain release factor 1 directs the termination of translation in response to the peptide chain termination codons UAG and UAA. The protein is Peptide chain release factor 1 of Nitrosospira multiformis (strain ATCC 25196 / NCIMB 11849 / C 71).